The following is a 189-amino-acid chain: UPF0301 protein CF0373 (189 aa).

The protein belongs to the UPF0301 (AlgH) family.

This Chlamydia felis (strain Fe/C-56) (Chlamydophila felis) protein is UPF0301 protein CF0373.